Consider the following 918-residue polypeptide: Interleukin-6 receptor subunit beta (918 aa).

A signal peptide spans 1-22; that stretch reads MSALRIWLMQALLIFLTTESIG. The Extracellular portion of the chain corresponds to 23–618; the sequence is QLVEPCGYIY…TLKFAQGEIE (596 aa). The Ig-like C2-type domain occupies 26-120; sequence EPCGYIYPEF…IEQNVYGITI (95 aa). Intrachain disulfides connect Cys28/Cys54 and Cys48/Cys103. Residues Asn43, Asn61, Asn83, and Asn131 are each glycosylated (N-linked (GlcNAc...) asparagine). Fibronectin type-III domains are found at residues 125 to 215, 223 to 323, 328 to 418, 422 to 516, and 518 to 612; these read PPDI…NFDP, PPHN…TYED, APSF…IPGS, ASHP…LKQA, and PSKG…TLKF. Cysteines 134 and 144 form a disulfide. The N-linked (GlcNAc...) asparagine glycan is linked to Asn157. An intrachain disulfide couples Cys172 to Cys181. Asn205 and Asn226 each carry an N-linked (GlcNAc...) asparagine glycan. The short motif at 309 to 313 is the WSXWS motif element; sequence WSDWS. Asn382 and Asn389 each carry an N-linked (GlcNAc...) asparagine glycan. Cys457 and Cys465 form a disulfide bridge. N-linked (GlcNAc...) asparagine glycans are attached at residues Asn477 and Asn552. Residues 619–640 form a helical membrane-spanning segment; that stretch reads AIVVPVCLAFLLTTLLGVLFCF. Over 641 to 918 the chain is Cytoplasmic; sequence NKRDLIKKHI…TVRQGGYMPQ (278 aa). A Box 1 motif motif is present at residues 650–658; sequence IWPNVPDPS. Disordered stretches follow at residues 659-679, 720-754, 773-795, and 817-842; these read KSHI…NSKD, TEGH…STAS, VQVF…PEDL, and SCSQ…GSEE. Phosphoserine is present on residues Ser660 and Ser666. Positions 730 to 751 are enriched in low complexity; sequence SSCMSSSRPSISSSEENESAQS. Over residues 773–785 the composition is skewed to polar residues; the sequence is VQVFSRSESTQPL. 4 positions are modified to phosphoserine: Ser781, Ser788, Ser828, and Ser838.

This sequence belongs to the type I cytokine receptor family. Type 2 subfamily. As to quaternary structure, component of a hexamer of two molecules each of IL6, IL6R and IL6ST; associates with the complex IL6:IL6R but does not interact with IL6. Forms heterodimers composed of LIFR and IL6ST (type I OSM receptor) which are activated by LIF and OSM. Also forms heterodimers composed of OSMR and IL6ST (type II receptor) which are activated by OSM but not by LIF. Interacts with HCK. Interacts with INPP5D/SHIP1. Interacts with SRC and YES. Interacts with ARMH4; this interaction prevents IL6ST protein homodimerization and bridges ARMH4 with IL6R and STAT3 and therefore inhibits phosphorylation of STAT3 at 'Tyr-705'. Phosphorylation of Ser-781 down-regulates cell surface expression. In terms of processing, heavily N-glycosylated. Glycosylation is required for protein stability and localization in plasma membrane but not for ligand binding. As to expression, found in hepatocytes, astrocytes, fibroblasts and endothelial cells.

The protein resides in the cell membrane. In terms of biological role, signal-transducing molecule. The receptor systems for IL6, LIF, OSM, CNTF, IL11, CTF1 and BSF3 can utilize IL6ST for initiating signal transmission. Binding of IL6 to IL6R induces IL6ST homodimerization and formation of a high-affinity receptor complex, which activates the intracellular JAK-MAPK and JAK-STAT3 signaling pathways. That causes phosphorylation of IL6ST tyrosine residues which in turn activates STAT3. In parallel, the IL6 signaling pathway induces the expression of two cytokine receptor signaling inhibitors, SOCS1 and SOCS3, which inhibit JAK and terminate the activity of the IL6 signaling pathway as a negative feedback loop. Also activates the yes-associated protein 1 (YAP) and NOTCH pathways to control inflammation-induced epithelial regeneration, independently of STAT3. Mediates signals which regulate immune response, hematopoiesis, pain control and bone metabolism. Has a role in embryonic development. Essential for survival of motor and sensory neurons and for differentiation of astrocytes. Required for expression of TRPA1 in nociceptive neurons. Required for the maintenance of PTH1R expression in the osteoblast lineage and for the stimulation of PTH-induced osteoblast differentiation. Required for normal trabecular bone mass and cortical bone composition. This is Interleukin-6 receptor subunit beta from Rattus norvegicus (Rat).